Reading from the N-terminus, the 340-residue chain is Zinc finger protein 488 (340 aa).

Positions 72–187 (AELALLVAPG…SVFPAGESAD (116 aa)) are important for transcriptional repression activity. Residues 77-180 (LVAPGKPRPG…AERPELTSVF (104 aa)) are disordered. Positions 82–91 (KPRPGKPLPP) are enriched in pro residues. Basic and acidic residues predominate over residues 106–125 (PRMKDRQVDAQAQEREHDDP). C2H2-type zinc fingers lie at residues 275-302 (NWCA…KKEH) and 317-339 (LACP…MTSH). The short motif at 298–305 (HKKEHAGP) is the Nuclear localization signal element.

This sequence belongs to the krueppel C2H2-type zinc-finger protein family. Interacts with OLIG2.

The protein localises to the nucleus. Functionally, transcriptional repressor. Plays a role in oligodendrocyte differentiation, together with OLIG2. Mediates Notch signaling-activated formation of oligodendrocyte precursors. Promotes differentiation of adult neural stem progenitor cells (NSPCs) into mature oligodendrocytes and contributes to remyelination following nerve injury. The polypeptide is Zinc finger protein 488 (ZNF488) (Homo sapiens (Human)).